The chain runs to 860 residues: GPI ethanolamine phosphate transferase 2 (860 aa).

Asparagine 123 and asparagine 180 each carry an N-linked (GlcNAc...) asparagine glycan. Transmembrane regions (helical) follow at residues 408-428, 438-458, 459-479, 487-506, 524-544, 555-575, 576-596, and 639-659; these read LGGI…FSAL, LYLI…TVEE, EHQI…ISGS, FNWM…NQTG, NHPV…NKVW, LAFL…ITQA, WEAG…PGTL, and AFLT…LFMV. Asparagine 672 carries N-linked (GlcNAc...) asparagine glycosylation. The next 4 membrane-spanning stretches (helical) occupy residues 692–712, 736–756, 795–815, and 834–854; these read LVLV…FSMG, FVGV…STAG, VYVV…TCFF, and FVWT…IFVV.

The protein belongs to the PIGG/PIGN/PIGO family. PIGG subfamily.

The protein localises to the endoplasmic reticulum membrane. Its pathway is glycolipid biosynthesis; glycosylphosphatidylinositol-anchor biosynthesis. Its function is as follows. Ethanolamine phosphate transferase involved in glycosylphosphatidylinositol-anchor biosynthesis. Transfers ethanolamine phosphate to the GPI second mannose. The protein is GPI ethanolamine phosphate transferase 2 (LAS21) of Yarrowia lipolytica (strain CLIB 122 / E 150) (Yeast).